The primary structure comprises 103 residues: SOSS complex subunit C (103 aa).

It belongs to the SOSS-C family. Belongs to the multiprotein complex Integrator. Component of the SOSS complex, composed of soss-b (soss-b1/nabp2 or soss-b2/nabp1), soss-a/ints3 and soss-c/inip.

It is found in the nucleus. Component of the SOSS complex, a multiprotein complex that functions downstream of the MRN complex to promote DNA repair and G2/M checkpoint. The SOSS complex associates with single-stranded DNA at DNA lesions and influences diverse endpoints in the cellular DNA damage response including cell-cycle checkpoint activation, recombinational repair and maintenance of genomic stability. Required for efficient homologous recombination-dependent repair of double-strand breaks (DSBs). The protein is SOSS complex subunit C (inip) of Danio rerio (Zebrafish).